The sequence spans 627 residues: (-)-alpha-pinene synthase 1, chloroplastic (627 aa).

The N-terminal 36 residues, 1 to 36 (MALVSIAPLASKSCLHKSLSSSAHELKTICRTIPTL), are a transit peptide targeting the chloroplast. Mg(2+)-binding residues include Asp378, Asp382, and Asp530. A DDXXD motif motif is present at residues 378-382 (DDMYD).

The protein belongs to the terpene synthase family. Tpsd subfamily. Requires Mg(2+) as cofactor. It depends on Mn(2+) as a cofactor.

The protein localises to the plastid. It localises to the chloroplast. The catalysed reaction is (2E)-geranyl diphosphate = (1S,5S)-beta-pinene + diphosphate. It catalyses the reaction (2E)-geranyl diphosphate = (1S,5S)-alpha-pinene + diphosphate. The protein operates within terpene metabolism; oleoresin biosynthesis. Functionally, terpene synthase (TPS) involved in the biosynthesis of monoterpene natural products included in conifer oleoresin secretions and volatile emissions; these compounds contribute to biotic and abiotic stress defense against herbivores and pathogens. Catalyzes the conversion of (2E)-geranyl diphosphate (GPP) to (1S,5S)-beta-pinene. In Picea sitchensis (Sitka spruce), this protein is (-)-alpha-pinene synthase 1, chloroplastic.